A 920-amino-acid chain; its full sequence is Alpha-L-rhamnosidase (920 aa).

Residues 1–19 (MCVVRTFWFAVLTVIFAVS) form the signal peptide. C20 carries N-palmitoyl cysteine lipidation. C20 carries the S-diacylglycerol cysteine lipid modification. Residues D500, 504-506 (RDE), D513, and W565 each bind alpha-L-rhamnose. The Proton donor role is filled by E506. E779 serves as the catalytic Proton acceptor. H800 is an alpha-L-rhamnose binding site.

This sequence belongs to the glycosyl hydrolase 78 family.

It is found in the cell membrane. The enzyme catalyses Hydrolysis of terminal non-reducing alpha-L-rhamnose residues in alpha-L-rhamnosides.. Its function is as follows. Alpha-L-rhamnosidase involved in ulvan degradation. Ulvan is the main polysaccharide component of the Ulvales (green seaweed) cell wall. It is composed of disaccharide building blocks comprising 3-sulfated rhamnose (Rha3S) linked to D-glucuronic acid (GlcA), L-iduronic acid (IduA), or D-xylose (Xyl). The enzyme is able to degrade p-nitrophenyl-alpha-L-rhamnopyranoside (PNP-Rha) in vitro. Incubating the enzyme with the products obtained after degradation with ulvan lyase and beta-glucuronyl hydrolase (i.e. the trisaccharides beta-alpha-L-Rha3S-IduA-Rha3S and beta-alpha-L-Rha3S-GlcA-Rha3S) showed no degradation, suggesting that the enzyme is active on neutral rhamnose and that desulfation of the oligosaccharide must be achieved before cleavage of rhamnose. In Alteromonas sp. (strain LOR), this protein is Alpha-L-rhamnosidase.